Here is a 252-residue protein sequence, read N- to C-terminus: Small ribosomal subunit protein eS4 (252 aa).

Positions 43–106 constitute an S4 RNA-binding domain; that stretch reads LPLLILVRDM…NKYYRVIPVP (64 aa).

This sequence belongs to the eukaryotic ribosomal protein eS4 family.

This is Small ribosomal subunit protein eS4 from Desulfurococcus amylolyticus (strain DSM 18924 / JCM 16383 / VKM B-2413 / 1221n) (Desulfurococcus kamchatkensis).